Reading from the N-terminus, the 790-residue chain is Protein sel-1 homolog 1 (790 aa).

The N-terminal stretch at 1 to 21 (MQVRVRLSLLLLCAVLLGSAA) is a signal peptide. The segment at 22–51 (ATSDDKTNQDDSLDSKSSLPTDESVKDHTT) is disordered. At 22-734 (ATSDDKTNQD…LFTQLDMDQL (713 aa)) the chain is on the lumenal side. Positions 23–733 (TSDDKTNQDD…DLFTQLDMDQ (711 aa)) are interaction with ERLEC1, OS9 and SYVN1. S64 is modified (phosphoserine). Positions 67-78 (AEVESLLQDEED) are enriched in acidic residues. The disordered stretch occupies residues 67-98 (AEVESLLQDEEDSSKTQEEEISFLESPNPSSK). Residues 118 to 166 (AHGEPCHFPFLFLDKEYDECTSDGREDGRLWCATTYDYKTDEKWGFCET) enclose the Fibronectin type-II domain. Intrachain disulfides connect C123–C149 and C137–C164. Sel1-like repeat units follow at residues 179–214 (AEMI…GMNH), 215–250 (TKAL…EEGS), 251–286 (PKGQ…LGGN), 287–322 (LIAH…NHVA), 369–405 (VQAQ…NAGN), 406–442 (SHAM…DMGN), 443–478 (PVGQ…EQGW), 479–514 (VDGQ…QGGH), and 515–550 (ILAF…ERGR). N-linked (GlcNAc...) asparagine glycans are attached at residues N191 and N213. The N-linked (GlcNAc...) asparagine glycan is linked to N268. The segment at 348 to 533 (NSGMLEEDLI…MHASGTGVMR (186 aa)) is important for homodimerization and oligomerization. N427 is a glycosylation site (N-linked (GlcNAc...) asparagine). N604 carries N-linked (GlcNAc...) asparagine glycosylation. Sel1-like repeat units follow at residues 623-658 (TVAR…EQQH) and 660-695 (AQAM…EASP). The segment at 639 to 719 (TDVDYETAFI…VVYFLQYIRE (81 aa)) is interaction with SYVN1. The segment at 734 to 790 (LLGPEWDLYLMTIIALLLGTVIAYRQRQHQDIPVPRPPGPRPAPPQQEGPPEQQPPQ) is mediates retention in the endoplasmic reticulum. The chain crosses the membrane as a helical span at residues 735-755 (LGPEWDLYLMTIIALLLGTVI). The Cytoplasmic segment spans residues 756–790 (AYRQRQHQDIPVPRPPGPRPAPPQQEGPPEQQPPQ). The segment at 763–790 (QDIPVPRPPGPRPAPPQQEGPPEQQPPQ) is disordered. Positions 767–790 (VPRPPGPRPAPPQQEGPPEQQPPQ) are enriched in pro residues.

It belongs to the sel-1 family. Homodimer and homooligomer. May form a complex with ERLEC1, HSPA5, OS9, and SYVN1. Interacts with FOXRED2 and EDEM1. Interacts with LPL and LMF1; may stabilize the complex formed by LPL and LMF1 and thereby promote the export of LPL dimers. Component of the HRD1 complex, which comprises at least SYNV1/HRD1, DERL1/2, FAM8A1, HERPUD1/HERP, OS9, SEL1L and UBE2J1. SYNV1 assembles with SEL1L and FAM8A1 through its transmembrane domains, but interaction with its cytoplasmic domain is required to confer stability to FAM8A1 and enhance recruitment of HERPUD1. The interaction with SYNV1/HRD1 is direct. Post-translationally, N-glycosylated. As to expression, highly expressed in pancreas, white adipose tissue, liver and spleen (at protein level). Detected in heart, brain, spleen, lung, liver, kidney and testis.

The protein localises to the endoplasmic reticulum membrane. In terms of biological role, plays a role in the endoplasmic reticulum quality control (ERQC) system also called ER-associated degradation (ERAD) involved in ubiquitin-dependent degradation of misfolded endoplasmic reticulum proteins. Enhances SYVN1 stability. Plays a role in LPL maturation and secretion. Required for normal differentiation of the pancreas epithelium, and for normal exocrine function and survival of pancreatic cells. May play a role in Notch signaling. The protein is Protein sel-1 homolog 1 (Sel1l) of Mus musculus (Mouse).